Here is a 65-residue protein sequence, read N- to C-terminus: Large ribosomal subunit protein bL31 (65 aa).

4 residues coordinate Zn(2+): Cys-16, Cys-18, Cys-36, and Cys-39.

This sequence belongs to the bacterial ribosomal protein bL31 family. Type A subfamily. Part of the 50S ribosomal subunit. Requires Zn(2+) as cofactor.

Functionally, binds the 23S rRNA. In Desulfitobacterium hafniense (strain DSM 10664 / DCB-2), this protein is Large ribosomal subunit protein bL31.